The sequence spans 130 residues: Small ribosomal subunit protein uS9 (130 aa).

The protein belongs to the universal ribosomal protein uS9 family.

This is Small ribosomal subunit protein uS9 from Bacillus licheniformis (strain ATCC 14580 / DSM 13 / JCM 2505 / CCUG 7422 / NBRC 12200 / NCIMB 9375 / NCTC 10341 / NRRL NRS-1264 / Gibson 46).